The sequence spans 563 residues: Germacrene-A synthase (563 aa).

Mg(2+) is bound by residues D316, D320, D461, and E469. A DDXXD motif motif is present at residues 316 to 320 (DDIYD).

Belongs to the terpene synthase family. Tpsa subfamily. Mg(2+) is required as a cofactor. Expressed in young leaves. Detected in trichomes and cones.

The catalysed reaction is (2E,6E)-farnesyl diphosphate = (+)-(R)-germacrene A + diphosphate. It functions in the pathway secondary metabolite biosynthesis; terpenoid biosynthesis. Functionally, sesquiterpene synthase that catalyzes the formation of germacrene A. Can use farnesyl diphosphate as substrate, but not geranyl diphosphate or geranylgeranyl diphosphate. Beta-elemene, the initially measured product in the assay, is derived nonenzymatically from germacrene A. The sequence is that of Germacrene-A synthase from Humulus lupulus (European hop).